The following is a 730-amino-acid chain: Hemolytic phospholipase C (730 aa).

Positions 1–38 (MTENWKFRRRTFLKHGAQAATLAGLSGLFPETLRRALA) form a signal peptide, tat-type signal.

The protein belongs to the bacterial phospholipase C family. In terms of processing, predicted to be exported by the Tat system. The position of the signal peptide cleavage has not been experimentally proven.

It catalyses the reaction a 1,2-diacyl-sn-glycero-3-phosphocholine + H2O = phosphocholine + a 1,2-diacyl-sn-glycerol + H(+). Hydrolyzes sphingomyelin in addition to phosphatidylcholine. The protein is Hemolytic phospholipase C (plcH) of Pseudomonas aeruginosa (strain ATCC 15692 / DSM 22644 / CIP 104116 / JCM 14847 / LMG 12228 / 1C / PRS 101 / PAO1).